The following is a 618-amino-acid chain: Probable Xaa-Pro aminopeptidase P (618 aa).

The Mn(2+) site is built by Asp-414, Asp-425, Glu-523, and Glu-537.

This sequence belongs to the peptidase M24B family. Requires Mn(2+) as cofactor.

It carries out the reaction Release of any N-terminal amino acid, including proline, that is linked to proline, even from a dipeptide or tripeptide.. Functionally, catalyzes the removal of a penultimate prolyl residue from the N-termini of peptides. In Metarhizium robertsii (strain ARSEF 23 / ATCC MYA-3075) (Metarhizium anisopliae (strain ARSEF 23)), this protein is Probable Xaa-Pro aminopeptidase P (AMPP).